The primary structure comprises 946 residues: RIPOR family member 3 (946 aa).

A phosphoserine mark is found at Ser9, Ser24, and Ser340. Thr345 carries the phosphothreonine modification. A phosphoserine mark is found at Ser351 and Ser384. Residues 390 to 512 (GPSLRSQSQE…GDREDGPGVA (123 aa)) form a disordered region. Residues 437 to 446 (SIEEEAREDP) show a composition bias toward basic and acidic residues. A compositionally biased stretch (polar residues) spans 478-495 (SLPQGSLFHSGTASSSQN). Positions 496–508 (GHEEGATGDREDG) are enriched in basic and acidic residues.

It belongs to the RIPOR family.

This Homo sapiens (Human) protein is RIPOR family member 3.